Reading from the N-terminus, the 264-residue chain is uncharacterized protein (264 aa).

The next 8 helical transmembrane spans lie at 19-39 (LFPA…LPFL), 42-62 (YDWL…SGLE), 69-89 (VITL…HMGS), 100-120 (IFGV…YLCQ), 136-156 (FAVV…HFSI), 160-180 (WWLS…YEVN), 192-212 (FILI…FGAW), and 223-243 (LVHL…FLIV).

It is found in the cell membrane. This is an uncharacterized protein from Bacillus subtilis (strain 168).